We begin with the raw amino-acid sequence, 258 residues long: DNA repair protein RecO (258 aa).

The protein belongs to the RecO family.

Functionally, involved in DNA repair and RecF pathway recombination. The polypeptide is DNA repair protein RecO (Syntrophotalea carbinolica (strain DSM 2380 / NBRC 103641 / GraBd1) (Pelobacter carbinolicus)).